The following is a 142-amino-acid chain: MIRCTDINEITPFSSFISKIPNHCGTHMDASRHFVKDGLSINELPIGYFCHKDVVLLEVPKGEAEGITKEDLEPYAAILAQVSFAFLCTGFEKYRTENPLIYQNEGPYIATSAGKYLSDNYPNLKGVGIWFPCTWFAVFSCT.

The chain crosses the membrane as a helical span at residues 75–91; it reads YAAILAQVSFAFLCTGF.

It is found in the membrane. This is an uncharacterized protein from Haemophilus influenzae (strain ATCC 51907 / DSM 11121 / KW20 / Rd).